Here is a 548-residue protein sequence, read N- to C-terminus: Chaperonin GroEL (548 aa).

Residues 30–33, K51, 87–91, G415, 479–481, and D495 contribute to the ATP site; these read TLGP, DGTTT, and NAA.

Belongs to the chaperonin (HSP60) family. Forms a cylinder of 14 subunits composed of two heptameric rings stacked back-to-back. Interacts with the co-chaperonin GroES.

It localises to the cytoplasm. It carries out the reaction ATP + H2O + a folded polypeptide = ADP + phosphate + an unfolded polypeptide.. Its function is as follows. Together with its co-chaperonin GroES, plays an essential role in assisting protein folding. The GroEL-GroES system forms a nano-cage that allows encapsulation of the non-native substrate proteins and provides a physical environment optimized to promote and accelerate protein folding. The sequence is that of Chaperonin GroEL from Oleidesulfovibrio alaskensis (strain ATCC BAA-1058 / DSM 17464 / G20) (Desulfovibrio alaskensis).